The following is a 330-amino-acid chain: uncharacterized protein (330 aa).

This sequence belongs to the ornithine cyclodeaminase/mu-crystallin family.

It localises to the cytoplasm. This is an uncharacterized protein from Schizosaccharomyces pombe (strain 972 / ATCC 24843) (Fission yeast).